A 278-amino-acid polypeptide reads, in one-letter code: Deoxyuridine 5'-triphosphate nucleotidohydrolase (278 aa).

Residues 171–173 and 273–274 each bind substrate; these read RSG and FG.

The protein belongs to the dUTPase family. Requires Mg(2+) as cofactor.

The catalysed reaction is dUTP + H2O = dUMP + diphosphate + H(+). Its function is as follows. Involved in nucleotide metabolism: produces dUMP, the immediate precursor of thymidine nucleotides and decreases the intracellular concentration of dUTP to avoid uracil incorporation into viral DNA. This chain is Deoxyuridine 5'-triphosphate nucleotidohydrolase, found in Homo sapiens (Human).